The following is a 120-amino-acid chain: Aspartate 1-decarboxylase (120 aa).

Ser-25 acts as the Schiff-base intermediate with substrate; via pyruvic acid in catalysis. A Pyruvic acid (Ser) modification is found at Ser-25. Thr-57 is a binding site for substrate. Tyr-58 acts as the Proton donor in catalysis. 73 to 75 serves as a coordination point for substrate; that stretch reads GAA.

The protein belongs to the PanD family. As to quaternary structure, heterooctamer of four alpha and four beta subunits. Pyruvate is required as a cofactor. In terms of processing, is synthesized initially as an inactive proenzyme, which is activated by self-cleavage at a specific serine bond to produce a beta-subunit with a hydroxyl group at its C-terminus and an alpha-subunit with a pyruvoyl group at its N-terminus.

The protein resides in the cytoplasm. It carries out the reaction L-aspartate + H(+) = beta-alanine + CO2. It functions in the pathway cofactor biosynthesis; (R)-pantothenate biosynthesis; beta-alanine from L-aspartate: step 1/1. Catalyzes the pyruvoyl-dependent decarboxylation of aspartate to produce beta-alanine. The polypeptide is Aspartate 1-decarboxylase (Ralstonia nicotianae (strain ATCC BAA-1114 / GMI1000) (Ralstonia solanacearum)).